The sequence spans 186 residues: Peptidyl-tRNA hydrolase (186 aa).

A tRNA-binding site is contributed by Y14. The active-site Proton acceptor is the H19. Y64, N66, and N112 together coordinate tRNA.

This sequence belongs to the PTH family. Monomer.

It is found in the cytoplasm. It carries out the reaction an N-acyl-L-alpha-aminoacyl-tRNA + H2O = an N-acyl-L-amino acid + a tRNA + H(+). Its function is as follows. Hydrolyzes ribosome-free peptidyl-tRNAs (with 1 or more amino acids incorporated), which drop off the ribosome during protein synthesis, or as a result of ribosome stalling. Catalyzes the release of premature peptidyl moieties from peptidyl-tRNA molecules trapped in stalled 50S ribosomal subunits, and thus maintains levels of free tRNAs and 50S ribosomes. This is Peptidyl-tRNA hydrolase from Bacillus cereus (strain ATCC 14579 / DSM 31 / CCUG 7414 / JCM 2152 / NBRC 15305 / NCIMB 9373 / NCTC 2599 / NRRL B-3711).